The primary structure comprises 289 residues: 3-hydroxy-16-methoxy-2,3-dihydrotabersonine N-methyltransferase (289 aa).

Positions 71–80 (MLDVGSGLGG) are SAM motif I. An SAM motif II region spans residues 134–142 (GKFDVVFTI). The tract at residues 161-170 (VAAPGAAIII) is SAM motif III. A Microbody targeting signal motif is present at residues 287–289 (KSI).

This sequence belongs to the class I-like SAM-binding methyltransferase superfamily. gTMT family. As to quaternary structure, homodimer. As to expression, mainly expressed in young leaves, and, to a lower extent, in mature leaves, flowers, stems and roots (at protein level).

The protein resides in the thylakoid. The protein localises to the peroxisome. The enzyme catalyses (3R)-3-hydroxy-16-methoxy-2,3-dihydrotabersonine + S-adenosyl-L-methionine = deacetoxyvindoline + S-adenosyl-L-homocysteine + H(+). It participates in alkaloid biosynthesis; vindoline biosynthesis. Its activity is regulated as follows. Inhibited by gamma-tocopherol. Its function is as follows. S-adenosyl-L-methionine-dependent N-methyltransferase that catalyzes a nitrogen methylation involved in vindoline biosynthesis. Displays a strict requirement for a 2,3-dihydro bond in the aspidosperma skeleton. Can use 2,3-dihydrotabersonine, 2,3-dihydro-3-hydroxytabersonine and 2,3,6,7-tetraydro-3-hydroxytabersonine as substrates, but not tabersonine, vincadifformine, 21-hydroxycyclolochnericine, tryptamine, norharmane, harmaline, catharanthine, norajmaline, ajmaline, serpentine, ajmalicine, yohimbine or gamma-tocopherol. Inactive with picrinine as substrate. This Catharanthus roseus (Madagascar periwinkle) protein is 3-hydroxy-16-methoxy-2,3-dihydrotabersonine N-methyltransferase.